We begin with the raw amino-acid sequence, 106 residues long: ATP-dependent Clp protease adapter protein ClpS (106 aa).

This sequence belongs to the ClpS family. In terms of assembly, binds to the N-terminal domain of the chaperone ClpA.

Functionally, involved in the modulation of the specificity of the ClpAP-mediated ATP-dependent protein degradation. The chain is ATP-dependent Clp protease adapter protein ClpS from Pseudoalteromonas atlantica (strain T6c / ATCC BAA-1087).